Consider the following 186-residue polypeptide: MDTFSTKNLALQAQKKLLSKMASKTVANVFIDDTSSEILDELYRATKEYTHNRKEAQKIIKNLIKIVMKLGVLYRNGQFSPEELLVMERFRKKVHTLAMTAVSFHQIDFTFDRRVVSSVLTECRDLLHQAVSSHLTAKSHSRINHVFNHFADYEFLSALYGPAEPYRTHLKRICEGVNKMLEEDNI.

It belongs to the TNFAIP8 family.

It localises to the cytoplasm. This is Tumor necrosis factor alpha-induced protein 8-like protein 1 (TNFAIP8L1) from Gallus gallus (Chicken).